The primary structure comprises 844 residues: MAIEKLSPGMQQYVDIKKQYPDAFLLFRMGDFYELFYEDAVNAAQILEISLTSRNKNADNPIPMAGVPYHSAQQYIDVLIEQGYKVAIAEQMEDPKQAVGVVKREVVQVITPGTVVDSSKPDSQNNFLVAIDREGNQFGLAYMDLVTGDFYVTGLLDFTLVCGEIRNLKAREVVLGYDLSEEEEQILSRQMNLVLSYEKESFEDLHLLDLRLATVEQTASSKLLQYVHRTQMRELNHLKPVIRYEIKDFLQMDYATKASLDLVENARSGKKQGSLFWLLDETKTAMGMRLLRSWIHRPLIDKERIVQRQEVVQVFLDHFFERSDLTDSLKGVYDIERLASRVSFGKTNPKDLLQLATTLSSVPRIRAILEGMEQPTLAYLIAQLDAIPELESLISAAIAPEAPHVITDGGIIRTGFDETLDKYRCVLREGTSWIAEIEAKERENSGISTLKIDYNKKDGYYFHVTNSQLGNVPAHFFRKATLKNSERFGTEELARIEGDMLEAREKSANLEYEIFMRIREEVGKYIQRLQTLAQGIATVDVLQSLAVVAETQHLIRPEFGDDSQIDIRKGRHAVVEKVMGAQTYIPNTIQMAEDTSIQLVTGPNMSGKSTYMRQLAMTAVMAQLGSYVPAESAHLPIFDAIFTRIGAADDLVSGQSTFMVEMMEANNAISHATKNSLILFDELGRGTATYDGMALAQSIIEYIHEHIGAKTLFATHYHELTSLESSLQHLVNVHVATLEQDGQVTFLHKIEPGPADKSYGIHVAKIAGLPADLLARADKILTQLENQGTESPPPMRQTSAVTEQISLFDRAEEHPILAELAKLDVYNMTPMQVMNVLVELKQKL.

602–609 (GPNMSGKS) provides a ligand contact to ATP.

It belongs to the DNA mismatch repair MutS family.

In terms of biological role, this protein is involved in the repair of mismatches in DNA. It is possible that it carries out the mismatch recognition step. This protein has a weak ATPase activity. The polypeptide is DNA mismatch repair protein MutS (Streptococcus pneumoniae (strain Hungary19A-6)).